Reading from the N-terminus, the 743-residue chain is ABC-type transporter claG (743 aa).

Residues N4 and N30 are each glycosylated (N-linked (GlcNAc...) asparagine). Residues 124-144 form a helical membrane-spanning segment; the sequence is SILLDIFLVIVVSWPFPFAWI. A glycan (N-linked (GlcNAc...) asparagine) is linked at N159. The ABC transporter domain maps to 200–439; that stretch reads VEFSGISMRP…FQDAGYTFPL (240 aa). 234–241 is a binding site for ATP; it reads GPSGSGKS. 5 consecutive transmembrane segments (helical) span residues 507-527, 560-580, 611-631, 636-656, and 661-681; these read YPSFVLEILTGAGCGILIGLS, GMLLCLTIGCAAGPAGVKTFG, IFLSALHFTSFYLILTTPIVS, LIVNLLYFYCIYGAASMISAI, and NGPLITMLTSVLFCALSGCAP.

It belongs to the ABC transporter superfamily. ABCG family.

The protein resides in the membrane. ABC-type transporter; part of the cla gene cluster that produces clavatol and ortho-quinone methide. The clavatol biosynthesis cluster cla and the terrestric acid cluster tra are both involved in the production of peniphenones and penilactones. This is ABC-type transporter claG from Penicillium crustosum (Blue mold fungus).